Reading from the N-terminus, the 1393-residue chain is Protein strawberry notch homolog 1 (1393 aa).

The disordered stretch occupies residues 129-148 (STRPSVSAPTVRNAMTSAPS). Phosphoserine is present on S148. Position 149 is an N6-acetyllysine (K149). S162 and S214 each carry phosphoserine. The residue at position 413 (K413) is an N6-acetyllysine. Residues 687–840 (APSNNSSPRD…ANSNTNSNSS (154 aa)) form a disordered region. A phosphoserine mark is found at S692, S693, and S697. A compositionally biased stretch (basic and acidic residues) spans 697 to 716 (SPCKENKIKKRKGEEITREA). Positions 733–747 (SGSESDASDNEESDY) are enriched in acidic residues. Phosphoserine is present on residues S754, S755, and S768. Over residues 756–775 (GDDDDFNPFLDESNEDDEND) the composition is skewed to acidic residues. Residues 781 to 793 (KDHKKNKEKKKKK) show a composition bias toward basic residues. Phosphoserine is present on residues S794 and S815. The span at 824–840 (PAPNSTPANSNTNSNSS) shows a compositional bias: low complexity. Positions 843–870 (TSQDAVERAQQMKKDLLDKLEKLAEDLP) form a coiled coil. K1222 is subject to N6-acetyllysine. Phosphoserine is present on S1386.

The protein belongs to the SBNO family.

It is found in the nucleus. Its function is as follows. Plays a crucial role in the regulation of neural stem cells (NSCs) proliferation. Enhances the phosphorylation of GSK3B through the PI3K-Akt signaling pathway, thereby upregulating the Wnt/beta-catenin signaling pathway and promoting the proliferation of NSCs. Improves ischemic stroke recovery while inhibiting neuroinflammation through small extracellular vesicles (sEVs)-mediated mechanism. Enhances the secretion of sEVs from NSCs, which in turn inhibit both the MAPK and NF-kappaB pathways in microglia. This inhibition suppresses the pro-inflammatory M1 polarization of microglia, promoting a shift towards the M2 anti-inflammatory phenotype, which is beneficial for reducing neuroinflammation. In Homo sapiens (Human), this protein is Protein strawberry notch homolog 1 (SBNO1).